Reading from the N-terminus, the 793-residue chain is Lon protease 1 (793 aa).

One can recognise a Lon N-terminal domain in the interval 8–202 (VPVIPLKNSV…KLLDRLQELK (195 aa)). Residue 354–361 (GPPGVGKT) coordinates ATP. The region spanning 590–770 (LLPPGVVTGL…NEVLKITLGV (181 aa)) is the Lon proteolytic domain. Catalysis depends on residues S676 and K719.

This sequence belongs to the peptidase S16 family. Homohexamer. Organized in a ring with a central cavity.

The protein resides in the cytoplasm. The catalysed reaction is Hydrolysis of proteins in presence of ATP.. ATP-dependent serine protease that mediates the selective degradation of mutant and abnormal proteins as well as certain short-lived regulatory proteins. Required for cellular homeostasis and for survival from DNA damage and developmental changes induced by stress. Degrades polypeptides processively to yield small peptide fragments that are 5 to 10 amino acids long. Binds to DNA in a double-stranded, site-specific manner. The protein is Lon protease 1 of Bdellovibrio bacteriovorus (strain ATCC 15356 / DSM 50701 / NCIMB 9529 / HD100).